We begin with the raw amino-acid sequence, 112 residues long: Hydrogenase maturation factor HypA (112 aa).

Ni(2+) is bound at residue H2. C73, C76, C88, and C91 together coordinate Zn(2+).

This sequence belongs to the HypA/HybF family.

Involved in the maturation of [NiFe] hydrogenases. Required for nickel insertion into the metal center of the hydrogenase. In Synechococcus elongatus (strain ATCC 33912 / PCC 7942 / FACHB-805) (Anacystis nidulans R2), this protein is Hydrogenase maturation factor HypA.